The chain runs to 283 residues: Bifunctional protein FolD (283 aa).

NADP(+)-binding positions include 163–165 (GRS), serine 188, and isoleucine 229.

It belongs to the tetrahydrofolate dehydrogenase/cyclohydrolase family. As to quaternary structure, homodimer.

It catalyses the reaction (6R)-5,10-methylene-5,6,7,8-tetrahydrofolate + NADP(+) = (6R)-5,10-methenyltetrahydrofolate + NADPH. The catalysed reaction is (6R)-5,10-methenyltetrahydrofolate + H2O = (6R)-10-formyltetrahydrofolate + H(+). It participates in one-carbon metabolism; tetrahydrofolate interconversion. Catalyzes the oxidation of 5,10-methylenetetrahydrofolate to 5,10-methenyltetrahydrofolate and then the hydrolysis of 5,10-methenyltetrahydrofolate to 10-formyltetrahydrofolate. This is Bifunctional protein FolD from Campylobacter fetus subsp. fetus (strain 82-40).